We begin with the raw amino-acid sequence, 256 residues long: Ubiquinone/menaquinone biosynthesis C-methyltransferase UbiE (256 aa).

S-adenosyl-L-methionine-binding positions include threonine 79, aspartate 100, and 128–129 (DA).

It belongs to the class I-like SAM-binding methyltransferase superfamily. MenG/UbiE family.

It carries out the reaction a 2-demethylmenaquinol + S-adenosyl-L-methionine = a menaquinol + S-adenosyl-L-homocysteine + H(+). It catalyses the reaction a 2-methoxy-6-(all-trans-polyprenyl)benzene-1,4-diol + S-adenosyl-L-methionine = a 5-methoxy-2-methyl-3-(all-trans-polyprenyl)benzene-1,4-diol + S-adenosyl-L-homocysteine + H(+). The protein operates within quinol/quinone metabolism; menaquinone biosynthesis; menaquinol from 1,4-dihydroxy-2-naphthoate: step 2/2. It functions in the pathway cofactor biosynthesis; ubiquinone biosynthesis. Its function is as follows. Methyltransferase required for the conversion of demethylmenaquinol (DMKH2) to menaquinol (MKH2) and the conversion of 2-polyprenyl-6-methoxy-1,4-benzoquinol (DDMQH2) to 2-polyprenyl-3-methyl-6-methoxy-1,4-benzoquinol (DMQH2). In Pseudomonas fluorescens (strain SBW25), this protein is Ubiquinone/menaquinone biosynthesis C-methyltransferase UbiE.